We begin with the raw amino-acid sequence, 1173 residues long: PR domain zinc finger protein 10 (1173 aa).

Positions 146-211 are disordered; sequence RLPPMEGADS…AEPPRPFDPN (66 aa). Residues 154–167 show a composition bias toward polar residues; sequence DSSTTINSLPSPNA. Residues 172–202 show a composition bias toward acidic residues; that stretch reads KEDDDDDDDDDDDEEEEDDDGEDSDLDDWEA. One can recognise an SET domain in the interval 248-366; it reads LPLVLYIDRF…PKQELKVWYA (119 aa). The tract at residues 267–371 is N-terminal PR domain; essential for transcriptional activator activity; sequence IPKRTQFGPL…KVWYAASYAE (105 aa). Residues 395 to 417 form a C2H2-type 1 zinc finger; the sequence is WPCYECNRRFMSSEQLQQHLNSH. Basic residues predominate over residues 430-447; the sequence is RGRTRTRRKFGPGRRPGR. Residues 430–451 form a disordered region; that stretch reads RGRTRTRRKFGPGRRPGRPPKF. C2H2-type zinc fingers lie at residues 559–581, 589–611, 617–639, 645–668, 673–695, 701–724, 756–779, 801–824, and 863–886; these read FKCL…LRFH, LTCD…MKFH, YSCI…VVVH, FSCP…RSFH, YQCT…MLRH, FLCS…QRMH, FKCR…SKRH, YYCQ…LKNH, and VCCP…RKKH. A C-terminal glutamine-rich region; essential for transcriptional activator activity region spans residues 926 to 1153; that stretch reads QAMTELSQTL…PASNSSQTTQ (228 aa). Disordered stretches follow at residues 1014 to 1056 and 1125 to 1173; these read PTSG…ANSA and KKSS…ISKP. Over residues 1150–1160 the composition is skewed to low complexity; sequence QTTQYIITTTT. The span at 1161-1173 shows a compositional bias: polar residues; sequence NMNGSSEVHISKP.

The protein belongs to the class V-like SAM-binding methyltransferase superfamily.

It localises to the nucleus. Its function is as follows. Transcriptional activator, essential for early embryonic development and survival of embryonic stem cells (ESCs). Supports cell growth and survival during early development by transcriptionally activating the expression of the translation initiation factor EIF3B, to sustain global translation. Activates the transcription of FLNC. The protein is PR domain zinc finger protein 10 (prdm10) of Xenopus tropicalis (Western clawed frog).